Here is a 233-residue protein sequence, read N- to C-terminus: LexA repressor (233 aa).

The H-T-H motif DNA-binding region spans 26-46 (FDEMKDALDLRSKSGIHRLIT). Active-site for autocatalytic cleavage activity residues include S154 and K192.

This sequence belongs to the peptidase S24 family. Homodimer.

The catalysed reaction is Hydrolysis of Ala-|-Gly bond in repressor LexA.. In terms of biological role, represses a number of genes involved in the response to DNA damage (SOS response), including recA and lexA. In the presence of single-stranded DNA, RecA interacts with LexA causing an autocatalytic cleavage which disrupts the DNA-binding part of LexA, leading to derepression of the SOS regulon and eventually DNA repair. The sequence is that of LexA repressor from Nitrobacter winogradskyi (strain ATCC 25391 / DSM 10237 / CIP 104748 / NCIMB 11846 / Nb-255).